The following is a 575-amino-acid chain: UvrABC system protein C (575 aa).

The GIY-YIG domain occupies 16 to 94; that stretch reads SQPGVYRMYD…IKLYQPRYNV (79 aa). Residues 204–239 form the UVR domain; the sequence is DQVLTQLISRMETASQNLEFEEAARIRDQIQAVRRV.

This sequence belongs to the UvrC family. As to quaternary structure, interacts with UvrB in an incision complex.

It is found in the cytoplasm. In terms of biological role, the UvrABC repair system catalyzes the recognition and processing of DNA lesions. UvrC both incises the 5' and 3' sides of the lesion. The N-terminal half is responsible for the 3' incision and the C-terminal half is responsible for the 5' incision. The protein is UvrABC system protein C of Shigella dysenteriae serotype 1 (strain Sd197).